A 455-amino-acid polypeptide reads, in one-letter code: Bifunctional protein GlmU (455 aa).

The segment at 1–226 (MSLDIVILAA…AMEVQGANDR (226 aa)) is pyrophosphorylase. UDP-N-acetyl-alpha-D-glucosamine contacts are provided by residues 8 to 11 (LAAG), Lys-22, Gln-73, 78 to 79 (GT), 99 to 101 (YGD), Gly-136, Glu-151, Asn-166, and Asn-224. Residue Asp-101 participates in Mg(2+) binding. Asn-224 contacts Mg(2+). The linker stretch occupies residues 227–247 (RQLSELERHYQLREGRRLMAQ). The segment at 248-455 (GVTLRDPARF…WKRPEKIKKS (208 aa)) is N-acetyltransferase. Positions 330 and 348 each coordinate UDP-N-acetyl-alpha-D-glucosamine. Catalysis depends on His-360, which acts as the Proton acceptor. UDP-N-acetyl-alpha-D-glucosamine is bound by residues Tyr-363 and Asn-374. Acetyl-CoA contacts are provided by residues Ala-377, 383 to 384 (NY), Ser-402, Ala-420, and Arg-437.

The protein in the N-terminal section; belongs to the N-acetylglucosamine-1-phosphate uridyltransferase family. It in the C-terminal section; belongs to the transferase hexapeptide repeat family. Homotrimer. Mg(2+) serves as cofactor.

The protein localises to the cytoplasm. It carries out the reaction alpha-D-glucosamine 1-phosphate + acetyl-CoA = N-acetyl-alpha-D-glucosamine 1-phosphate + CoA + H(+). The catalysed reaction is N-acetyl-alpha-D-glucosamine 1-phosphate + UTP + H(+) = UDP-N-acetyl-alpha-D-glucosamine + diphosphate. It functions in the pathway nucleotide-sugar biosynthesis; UDP-N-acetyl-alpha-D-glucosamine biosynthesis; N-acetyl-alpha-D-glucosamine 1-phosphate from alpha-D-glucosamine 6-phosphate (route II): step 2/2. The protein operates within nucleotide-sugar biosynthesis; UDP-N-acetyl-alpha-D-glucosamine biosynthesis; UDP-N-acetyl-alpha-D-glucosamine from N-acetyl-alpha-D-glucosamine 1-phosphate: step 1/1. Its pathway is bacterial outer membrane biogenesis; LPS lipid A biosynthesis. In terms of biological role, catalyzes the last two sequential reactions in the de novo biosynthetic pathway for UDP-N-acetylglucosamine (UDP-GlcNAc). The C-terminal domain catalyzes the transfer of acetyl group from acetyl coenzyme A to glucosamine-1-phosphate (GlcN-1-P) to produce N-acetylglucosamine-1-phosphate (GlcNAc-1-P), which is converted into UDP-GlcNAc by the transfer of uridine 5-monophosphate (from uridine 5-triphosphate), a reaction catalyzed by the N-terminal domain. This Pseudomonas putida (strain ATCC 47054 / DSM 6125 / CFBP 8728 / NCIMB 11950 / KT2440) protein is Bifunctional protein GlmU.